Consider the following 128-residue polypeptide: Early 4 ORF1 protein (128 aa).

At 1–26 the chain is on the cytoplasmic side; that stretch reads MAAAVEALYVVLEREGAILPRQEGFS. A helical transmembrane segment spans residues 27–47; it reads GVYVFFSPINFVIPPMGAVML. The Extracellular portion of the chain corresponds to 48–99; sequence SLRLRVCIPPGYFGRFLALTDVNQPDVFTESYIMTPDMTEELSVVLFNHGDQ. The helical transmembrane segment at 100–120 threads the bilayer; the sequence is FFYGHAGMAVVRLMLIRVVFP. The Cytoplasmic segment spans residues 121 to 128; sequence VVRQASNV. Residues 125–128 carry the PBZ domain binding motif motif; the sequence is ASNV.

Belongs to the adenoviridae E4-ORF1 family. As to quaternary structure, may interact with host PDZ proteins through the PDZ domain binding motif (PBM), namely host DLG1, PATJ and TJP2.

The protein localises to the host membrane. Functionally, may modulate tight-junctions functions of infected cells through interactions with PDZ proteins. E4 ORF1 has ben show for Adenovirus 9 to interact with protein involved in tight junction regulation. May play a role in mTOR activation by activating PI3-kinase, thus overriding cellular checkpoint for translation. This is Early 4 ORF1 protein from Human adenovirus C serotype 2 (HAdV-2).